We begin with the raw amino-acid sequence, 156 residues long: Ribonuclease 7 (156 aa).

Positions 1–28 (MAPARAGFCPLLLLLLLGLWVAEIPVSA) are cleaved as a signal peptide. Residues 29-32 (KPKG) form an important for antibacterial activity region. Residue histidine 43 is the Proton acceptor of the active site. 4 residues coordinate dUMP: histidine 43, lysine 66, asparagine 69, and threonine 70. 4 disulfide bridges follow: cysteine 51–cysteine 109, cysteine 65–cysteine 119, cysteine 83–cysteine 134, and cysteine 90–cysteine 97. N-linked (GlcNAc...) asparagine glycosylation is present at asparagine 127. Residues 139 to 140 (KK) are important for antibacterial activity. Positions 151 and 154 each coordinate dUMP. Histidine 151 acts as the Proton donor in catalysis.

In terms of tissue distribution, expressed in collecting ducts in kidney, and in apical uroepithelium in bladder (at protein level). Expressed in various epithelial tissues including skin, respiratory tract, genito-urinary tract and, at a low level, in the gut. Expressed in liver, kidney, skeletal muscle and heart.

It is found in the secreted. Exhibits a potent RNase activity. Has broad-spectrum antimicrobial activity against many pathogenic microorganisms including uropathogenic E.coli (UPEC), and remarkably potent activity (lethal dose of 90% &lt; 30 nM) against a vancomycin resistant Enterococcus faecium. Causes loss of bacterial membrane integrity. Probably contributes to urinary tract sterility. Bactericidal activity is independent of RNase activity. The polypeptide is Ribonuclease 7 (RNASE7) (Homo sapiens (Human)).